The following is a 274-amino-acid chain: Thiamine kinase (274 aa).

The protein belongs to the thiamine kinase family.

The enzyme catalyses thiamine + ATP = thiamine phosphate + ADP + H(+). The protein operates within cofactor biosynthesis; thiamine diphosphate biosynthesis; thiamine phosphate from thiamine: step 1/1. In terms of biological role, catalyzes the ATP-dependent phosphorylation of thiamine to thiamine phosphate. Is involved in thiamine salvage. This Salmonella typhimurium (strain LT2 / SGSC1412 / ATCC 700720) protein is Thiamine kinase.